We begin with the raw amino-acid sequence, 122 residues long: Large ribosomal subunit protein uL18 (122 aa).

Positions 1–25 (MSQISRKQQTQKRHRRLRRHITGTS) are disordered. Basic residues predominate over residues 9–21 (QTQKRHRRLRRHI).

The protein belongs to the universal ribosomal protein uL18 family. Part of the 50S ribosomal subunit; part of the 5S rRNA/L5/L18/L25 subcomplex. Contacts the 5S and 23S rRNAs.

Its function is as follows. This is one of the proteins that bind and probably mediate the attachment of the 5S RNA into the large ribosomal subunit, where it forms part of the central protuberance. This Synechococcus sp. (strain CC9605) protein is Large ribosomal subunit protein uL18.